The following is a 92-amino-acid chain: uncharacterized protein (92 aa).

3 helical membrane passes run 1-21, 30-50, and 62-82; these read MNIY…LVGL, ANVL…IVVI, and IALA…KVIG.

The protein to M.thermoautotrophicum MTH1250.

The protein resides in the cell membrane. This is an uncharacterized protein from Methanocaldococcus jannaschii (strain ATCC 43067 / DSM 2661 / JAL-1 / JCM 10045 / NBRC 100440) (Methanococcus jannaschii).